The sequence spans 163 residues: Phosphopantetheine adenylyltransferase (163 aa).

A substrate-binding site is contributed by S9. Residues 9–10 and H17 contribute to the ATP site; that span reads SF. 3 residues coordinate substrate: K41, T73, and R87. ATP-binding positions include 88-90, E98, and 123-129; these read GLR and YAYFSSS.

This sequence belongs to the bacterial CoaD family. As to quaternary structure, homohexamer. Requires Mg(2+) as cofactor.

Its subcellular location is the cytoplasm. It catalyses the reaction (R)-4'-phosphopantetheine + ATP + H(+) = 3'-dephospho-CoA + diphosphate. Its pathway is cofactor biosynthesis; coenzyme A biosynthesis; CoA from (R)-pantothenate: step 4/5. In terms of biological role, reversibly transfers an adenylyl group from ATP to 4'-phosphopantetheine, yielding dephospho-CoA (dPCoA) and pyrophosphate. In Lactiplantibacillus plantarum (strain ATCC BAA-793 / NCIMB 8826 / WCFS1) (Lactobacillus plantarum), this protein is Phosphopantetheine adenylyltransferase.